Reading from the N-terminus, the 485-residue chain is Anthranilate synthase component I-like protein (485 aa).

Residues serine 69 and 271-273 (PFA) contribute to the L-tryptophan site. 306–307 (GT) lines the chorismate pocket. Glutamate 333 serves as a coordination point for Mg(2+). Chorismate contacts are provided by residues arginine 441, 455–457 (GAG), and glycine 457. Glutamate 470 contributes to the Mg(2+) binding site.

It belongs to the anthranilate synthase component I family. Tetramer of two components I and two components II. The cofactor is Mg(2+).

It carries out the reaction chorismate + L-glutamine = anthranilate + pyruvate + L-glutamate + H(+). The protein operates within amino-acid biosynthesis; L-tryptophan biosynthesis; L-tryptophan from chorismate: step 1/5. The chain is Anthranilate synthase component I-like protein (trpE2) from Synechocystis sp. (strain ATCC 27184 / PCC 6803 / Kazusa).